Here is a 266-residue protein sequence, read N- to C-terminus: UPF0294 protein YafD (266 aa).

Belongs to the UPF0294 family.

It localises to the cytoplasm. The sequence is that of UPF0294 protein YafD from Salmonella newport (strain SL254).